The primary structure comprises 88 residues: UPF0297 protein SSA_2241 (88 aa).

The protein belongs to the UPF0297 family.

The sequence is that of UPF0297 protein SSA_2241 from Streptococcus sanguinis (strain SK36).